The following is a 424-amino-acid chain: Probable ribonuclease FAU-1 (424 aa).

It belongs to the FAU-1 family.

Probable RNase involved in rRNA stability through maturation and/or degradation of precursor rRNAs. Binds to RNA in loop regions with AU-rich sequences. In Saccharolobus islandicus (strain Y.G.57.14 / Yellowstone #1) (Sulfolobus islandicus), this protein is Probable ribonuclease FAU-1.